Reading from the N-terminus, the 333-residue chain is Ribosomal protein L11 methyltransferase (333 aa).

S-adenosyl-L-methionine-binding residues include threonine 160, glycine 181, aspartate 203, and asparagine 267.

This sequence belongs to the methyltransferase superfamily. PrmA family.

It localises to the cytoplasm. It catalyses the reaction L-lysyl-[protein] + 3 S-adenosyl-L-methionine = N(6),N(6),N(6)-trimethyl-L-lysyl-[protein] + 3 S-adenosyl-L-homocysteine + 3 H(+). Functionally, methylates ribosomal protein L11. In Lachnoclostridium phytofermentans (strain ATCC 700394 / DSM 18823 / ISDg) (Clostridium phytofermentans), this protein is Ribosomal protein L11 methyltransferase.